The following is a 335-amino-acid chain: Aspartate carbamoyltransferase catalytic subunit (335 aa).

Positions 81 and 82 each coordinate carbamoyl phosphate. K109 serves as a coordination point for L-aspartate. Carbamoyl phosphate-binding residues include R131, H159, and Q162. The L-aspartate site is built by R192 and R246. Positions 287 and 288 each coordinate carbamoyl phosphate.

It belongs to the aspartate/ornithine carbamoyltransferase superfamily. ATCase family. In terms of assembly, heterododecamer (2C3:3R2) of six catalytic PyrB chains organized as two trimers (C3), and six regulatory PyrI chains organized as three dimers (R2).

The catalysed reaction is carbamoyl phosphate + L-aspartate = N-carbamoyl-L-aspartate + phosphate + H(+). It participates in pyrimidine metabolism; UMP biosynthesis via de novo pathway; (S)-dihydroorotate from bicarbonate: step 2/3. Functionally, catalyzes the condensation of carbamoyl phosphate and aspartate to form carbamoyl aspartate and inorganic phosphate, the committed step in the de novo pyrimidine nucleotide biosynthesis pathway. This is Aspartate carbamoyltransferase catalytic subunit from Caulobacter sp. (strain K31).